Consider the following 60-residue polypeptide: Large ribosomal subunit protein uL30 (60 aa).

The protein belongs to the universal ribosomal protein uL30 family. As to quaternary structure, part of the 50S ribosomal subunit.

In Shewanella woodyi (strain ATCC 51908 / MS32), this protein is Large ribosomal subunit protein uL30.